Reading from the N-terminus, the 198-residue chain is Zinc finger protein 41 homolog (198 aa).

Residues 1–12 (MEKPAGRKKKTP) show a composition bias toward basic residues. The disordered stretch occupies residues 1–55 (MEKPAGRKKKTPTPREEADVQKSALREEKVSGDRKPPERPTVPRKPRTEPCLSPE). Basic and acidic residues predominate over residues 13 to 38 (TPREEADVQKSALREEKVSGDRKPPE). C2H2-type zinc fingers lie at residues 87 to 109 (YECSECGRIFKHKTDHIRHQRVH), 115 to 137 (FKCAQCGKAFRHSSDVTKHQRTH), 143 to 165 (FKCGECGKAFNCGSNLLKHQKTH), and 171 to 193 (YECTHCGKAFAYSSCLIRHQKRH).

Belongs to the krueppel C2H2-type zinc-finger protein family.

It localises to the nucleus. Functionally, a putative DNA-binding regulatory protein associated with meiosis in spermatogenesis. In Homo sapiens (Human), this protein is Zinc finger protein 41 homolog (ZFP41).